The chain runs to 418 residues: Light-independent protochlorophyllide reductase subunit N (418 aa).

[4Fe-4S] cluster contacts are provided by Cys-17, Cys-42, and Cys-103.

The protein belongs to the BchN/ChlN family. In terms of assembly, protochlorophyllide reductase is composed of three subunits; ChlL, ChlN and ChlB. Forms a heterotetramer of two ChlB and two ChlN subunits. The cofactor is [4Fe-4S] cluster.

The enzyme catalyses chlorophyllide a + oxidized 2[4Fe-4S]-[ferredoxin] + 2 ADP + 2 phosphate = protochlorophyllide a + reduced 2[4Fe-4S]-[ferredoxin] + 2 ATP + 2 H2O. Its pathway is porphyrin-containing compound metabolism; chlorophyll biosynthesis (light-independent). Component of the dark-operative protochlorophyllide reductase (DPOR) that uses Mg-ATP and reduced ferredoxin to reduce ring D of protochlorophyllide (Pchlide) to form chlorophyllide a (Chlide). This reaction is light-independent. The NB-protein (ChlN-ChlB) is the catalytic component of the complex. This chain is Light-independent protochlorophyllide reductase subunit N, found in Prochlorococcus marinus (strain AS9601).